Reading from the N-terminus, the 315-residue chain is Adenine deaminase (315 aa).

Zn(2+) contacts are provided by His-14, His-16, and His-194. The Proton donor role is filled by Glu-197. Asp-275 is a binding site for Zn(2+). Asp-276 is a substrate binding site.

Belongs to the metallo-dependent hydrolases superfamily. Adenosine and AMP deaminases family. Adenine deaminase type 2 subfamily. It depends on Zn(2+) as a cofactor.

It catalyses the reaction adenine + H2O + H(+) = hypoxanthine + NH4(+). Its function is as follows. Catalyzes the hydrolytic deamination of adenine to hypoxanthine. Plays an important role in the purine salvage pathway and in nitrogen catabolism. This Ectopseudomonas mendocina (strain ymp) (Pseudomonas mendocina) protein is Adenine deaminase.